Consider the following 745-residue polypeptide: Probable GMP synthase [glutamine-hydrolyzing] (745 aa).

The tract at residues 1 to 37 is disordered; that stretch reads MKRSSSMLDINEDSQHSTNKAPPPKKAPEDRFDSANM. Residues 60 to 252 form the Glutamine amidotransferase type-1 domain; the sequence is RIAILDFGAQ…LFKVVGCCGN (193 aa). The For GATase activity role is filled by Cys-138. Residues His-226 and Glu-228 contribute to the active site. In terms of domain architecture, GMPS ATP-PPase spans 253 to 461; the sequence is FTIQNREQSC…LGLPESIVQR (209 aa). 280 to 286 is a binding site for ATP; it reads SGGVDSA. Substrate is bound by residues Arg-363, Asp-563, Gln-662, Lys-737, and Glu-743.

Homodimer.

The catalysed reaction is XMP + L-glutamine + ATP + H2O = GMP + L-glutamate + AMP + diphosphate + 2 H(+). It participates in purine metabolism; GMP biosynthesis; GMP from XMP (L-Gln route): step 1/1. This chain is Probable GMP synthase [glutamine-hydrolyzing] (gmps-1), found in Caenorhabditis elegans.